The sequence spans 33 residues: Unknown 31.6 kDa protein from 2D-PAGE (33 aa).

In Onion yellows phytoplasma, this protein is Unknown 31.6 kDa protein from 2D-PAGE.